The sequence spans 187 residues: TATA-box-binding protein (187 aa).

2 consecutive repeat copies span residues 10–86 (IENV…FDKL) and 101–179 (VQNI…VSRL).

Belongs to the TBP family.

Its function is as follows. General factor that plays a role in the activation of archaeal genes transcribed by RNA polymerase. Binds specifically to the TATA box promoter element which lies close to the position of transcription initiation. The protein is TATA-box-binding protein of Natronomonas pharaonis (strain ATCC 35678 / DSM 2160 / CIP 103997 / JCM 8858 / NBRC 14720 / NCIMB 2260 / Gabara) (Halobacterium pharaonis).